The sequence spans 585 residues: tRNA-guanine(15) transglycosylase (585 aa).

Asp95 functions as the Nucleophile in the catalytic mechanism. Residues Asp130 and Ala196 each coordinate substrate. Zn(2+)-binding residues include Cys279, Cys281, and Cys284. The PUA domain occupies 507–582 (VMRVVVNKEA…RAVKTRRGVE (76 aa)).

It belongs to the archaeosine tRNA-ribosyltransferase family. It depends on Zn(2+) as a cofactor.

It catalyses the reaction guanosine(15) in tRNA + 7-cyano-7-deazaguanine = 7-cyano-7-carbaguanosine(15) in tRNA + guanine. It functions in the pathway tRNA modification; archaeosine-tRNA biosynthesis. Functionally, exchanges the guanine residue with 7-cyano-7-deazaguanine (preQ0) at position 15 in the dihydrouridine loop (D-loop) of archaeal tRNAs. This chain is tRNA-guanine(15) transglycosylase, found in Pyrococcus furiosus (strain ATCC 43587 / DSM 3638 / JCM 8422 / Vc1).